The chain runs to 450 residues: MRADLAVSYGEERLPRYTSYPTAPHFSPVIDAGTYARWLSELPAGASASLYLHVPFCREMCWYCGCHTQIVRRDDLIAAYQRTLRSEIALVAETIGRRIKVEHIHFGGGTPTIMAPEAFAELMAAMRQAFFVLPSAEIAVEIDPRTLTADMVEAMRLSGVNRASLGVQSFDPIVQRAINRIQSFEQTAAVVDMLRHAGIAGINFDLIYGLPHQTVASCLDTVRRSLLLAPDRFSVFGYAHVPDFKKHQRMINQGALPDGPARHDQACAIANALKEAGYVQIGLDHFARPDDSMAVAFEERTLRRNFQGYTTDQGEVLLGFGASAIGHLPQGYVQNEVQIGAYAQSIGASRLATAKGYGLTDDDRLRADIIERIMCEFSADLGDICARHGAEPEAMLKSASRLKPLISDGVVRLDGDRLAVANDSRFLVRSVAAAFDAHLDPGKQLHSRAV.

Positions 42–276 (LPAGASASLY…CAIANALKEA (235 aa)) constitute a Radical SAM core domain. Position 51 (Y51) interacts with S-adenosyl-L-methionine. [4Fe-4S] cluster-binding residues include C57 and C61. Y63 lines the S-adenosyl-L-methionine pocket. [4Fe-4S] cluster is bound at residue C64. S-adenosyl-L-methionine contacts are provided by residues G108, 109-110 (GT), E141, Q168, R180, D205, A239, and I325.

This sequence belongs to the anaerobic coproporphyrinogen-III oxidase family. Monomer. [4Fe-4S] cluster serves as cofactor.

The protein localises to the cytoplasm. The enzyme catalyses coproporphyrinogen III + 2 S-adenosyl-L-methionine = protoporphyrinogen IX + 2 5'-deoxyadenosine + 2 L-methionine + 2 CO2. Its pathway is porphyrin-containing compound metabolism; protoporphyrin-IX biosynthesis; protoporphyrinogen-IX from coproporphyrinogen-III (AdoMet route): step 1/1. Involved in the heme biosynthesis. Catalyzes the anaerobic oxidative decarboxylation of propionate groups of rings A and B of coproporphyrinogen III to yield the vinyl groups in protoporphyrinogen IX. The protein is Oxygen-independent coproporphyrinogen III oxidase (hemN) of Bradyrhizobium diazoefficiens (strain JCM 10833 / BCRC 13528 / IAM 13628 / NBRC 14792 / USDA 110).